The following is an 83-amino-acid chain: Small ribosomal subunit protein bS20 (83 aa).

The protein belongs to the bacterial ribosomal protein bS20 family.

Its function is as follows. Binds directly to 16S ribosomal RNA. This is Small ribosomal subunit protein bS20 from Staphylococcus aureus (strain JH1).